A 325-amino-acid chain; its full sequence is Heat-inducible transcription repressor HrcA (325 aa).

It belongs to the HrcA family.

Negative regulator of class I heat shock genes (grpE-dnaK-dnaJ and groELS operons). Prevents heat-shock induction of these operons. This Staphylococcus haemolyticus (strain JCSC1435) protein is Heat-inducible transcription repressor HrcA.